A 216-amino-acid polypeptide reads, in one-letter code: Adenylate kinase (216 aa).

10–15 (GAGKGT) provides a ligand contact to ATP. The interval 30-59 (STGDMFRAAMKAETEMGLQAKSFIDKGALV) is NMP. AMP contacts are provided by residues threonine 31, arginine 36, 57–59 (ALV), 85–88 (GFPR), and glutamine 92. An LID region spans residues 126-163 (GRRICKECGATYHLEFNPPAKADVCDKCGGELYQRSDD). ATP is bound at residue arginine 127. Positions 130 and 133 each coordinate Zn(2+). 136–137 (TY) is a binding site for ATP. Zn(2+) is bound by residues cysteine 150 and cysteine 153. Positions 160 and 171 each coordinate AMP. ATP is bound at residue glutamine 199.

The protein belongs to the adenylate kinase family. As to quaternary structure, monomer.

The protein localises to the cytoplasm. The enzyme catalyses AMP + ATP = 2 ADP. It participates in purine metabolism; AMP biosynthesis via salvage pathway; AMP from ADP: step 1/1. Its function is as follows. Catalyzes the reversible transfer of the terminal phosphate group between ATP and AMP. Plays an important role in cellular energy homeostasis and in adenine nucleotide metabolism. The chain is Adenylate kinase from Bacillus cereus (strain G9842).